Consider the following 226-residue polypeptide: Enolase-phosphatase E1 (226 aa).

The protein belongs to the HAD-like hydrolase superfamily. MasA/MtnC family. In terms of assembly, monomer. The cofactor is Mg(2+).

It carries out the reaction 5-methylsulfanyl-2,3-dioxopentyl phosphate + H2O = 1,2-dihydroxy-5-(methylsulfanyl)pent-1-en-3-one + phosphate. The protein operates within amino-acid biosynthesis; L-methionine biosynthesis via salvage pathway; L-methionine from S-methyl-5-thio-alpha-D-ribose 1-phosphate: step 3/6. It participates in amino-acid biosynthesis; L-methionine biosynthesis via salvage pathway; L-methionine from S-methyl-5-thio-alpha-D-ribose 1-phosphate: step 4/6. Functionally, bifunctional enzyme that catalyzes the enolization of 2,3-diketo-5-methylthiopentyl-1-phosphate (DK-MTP-1-P) into the intermediate 2-hydroxy-3-keto-5-methylthiopentenyl-1-phosphate (HK-MTPenyl-1-P), which is then dephosphorylated to form the acireductone 1,2-dihydroxy-3-keto-5-methylthiopentene (DHK-MTPene). This Shewanella sp. (strain W3-18-1) protein is Enolase-phosphatase E1.